The chain runs to 1048 residues: Probable inactive receptor kinase At5g10020 (1048 aa).

Residues 1–21 (MSHFLTFCFLSLLLLLHGANA) form the signal peptide. LRR repeat units follow at residues 100–120 (RLRNLSLSGNSFSGRVVPSLG), 124–146 (SLQHLDLSDNGFYGPIPGRISEL), 148–169 (SLNHLNLSSNKFEGGFPSGFRN), 172–194 (QLRSLDLHKNEIWGDVGEIFTEL), 196–217 (NVEFVDLSCNRFNGGLSLPMEN), 224–246 (TLRHLNLSHNALNGKFFSEESIG), 250–272 (NLEIVDLENNQINGELPHFGSQP), 273–294 (SLRILKLARNELFGLVPQELLQ), 298–319 (PLLELDLSRNGFTGSISEINSS), 320–342 (TLTMLNLSSNGLSGDLPSSFKSC), 365–387 (TPDVLDLSSNNLSGSLPNFTSAF), 389–411 (RLSVLSIRNNSVSGSLPSLWGDS), 412–433 (QFSVIDLSSNKFSGFIPVSFFT), 436–457 (SLRSLNLSRNNLEGPIPFRGSR), 469–491 (QMELLDLSTNSLTGMLPGDIGTM), 493–516 (KIKVLNLANNKLSGELPSDLNKLS), 517–539 (GLLFLDLSNNTFKGQIPNKLPSQ), and 540–560 (MVGFNVSYNDLSGIIPEDLRS). A helical membrane pass occupies residues 602 to 622 (IAIIVASVGAAIMILFVLFAY). The tract at residues 696 to 733 (EQGAPATSAPTNLLDDYPAASGRKSSSGGSPLSSSPRF) is disordered. The span at 716–733 (SGRKSSSGGSPLSSSPRF) shows a compositional bias: low complexity. S744 bears the Phosphoserine mark. In terms of domain architecture, Protein kinase spans 768 to 1045 (RAPAEVLGRS…IRQVLDHLTS (278 aa)). ATP is bound by residues 774-782 (LGRSSHGTL) and K796.

This sequence belongs to the protein kinase superfamily.

The protein localises to the membrane. The chain is Probable inactive receptor kinase At5g10020 from Arabidopsis thaliana (Mouse-ear cress).